The sequence spans 95 residues: Protein IDA-LIKE 2 (95 aa).

An N-terminal signal peptide occupies residues Met-1–Asn-35. The tract at residues Ala-75–Pro-95 is disordered.

In terms of tissue distribution, expressed in leaves, buds, flowers, seedlings and seeds. Detected at the base of pedicel, in the floral and funicule abscission zones and in vascular tissues.

The protein resides in the secreted. It localises to the extracellular space. May be involved in floral abscission. This Arabidopsis thaliana (Mouse-ear cress) protein is Protein IDA-LIKE 2 (IDL2).